Consider the following 175-residue polypeptide: Co-chaperone protein HscB homolog (175 aa).

One can recognise a J domain in the interval 7–79 (SHFDLFHLPA…LKRATYLLSL (73 aa)).

Belongs to the HscB family. In terms of assembly, interacts with HscA and stimulates its ATPase activity.

Co-chaperone involved in the maturation of iron-sulfur cluster-containing proteins. Seems to help targeting proteins to be folded toward HscA. The sequence is that of Co-chaperone protein HscB homolog from Burkholderia multivorans (strain ATCC 17616 / 249).